We begin with the raw amino-acid sequence, 1221 residues long: Coatomer subunit alpha (1221 aa).

WD repeat units lie at residues T7–K46, E49–T88, G91–E130, G133–T172, G202–F241, G243–M282, R285–V323, P358–V399, and W528–K567. Residues G820 to L885 are disordered. The segment covering S844–Q857 has biased composition (low complexity). One copy of the WD 10 repeat lies at P910–D953.

In terms of assembly, oligomeric complex that consists of at least the alpha, beta, beta', gamma, delta, epsilon and zeta subunits.

It localises to the cytoplasm. It is found in the golgi apparatus membrane. The coatomer is a cytosolic protein complex that binds to dilysine motifs and reversibly associates with Golgi non-clathrin-coated vesicles, which further mediate biosynthetic protein transport from the ER, via the Golgi up to the trans Golgi network. Coatomer complex is required for budding from Golgi membranes, and is essential for the retrograde Golgi-to-ER transport of dilysine-tagged proteins. The polypeptide is Coatomer subunit alpha (copa) (Dictyostelium discoideum (Social amoeba)).